A 278-amino-acid chain; its full sequence is DNA repair protein RecO (278 aa).

The segment covering 1-12 has biased composition (polar residues); sequence MGTNDALTSTED. The segment at 1 to 41 is disordered; sequence MGTNDALTSTEDAVTAGANDAPLPAPPEPPRKARRATSRTS.

Belongs to the RecO family.

Its function is as follows. Involved in DNA repair and RecF pathway recombination. In Burkholderia orbicola (strain AU 1054), this protein is DNA repair protein RecO.